We begin with the raw amino-acid sequence, 616 residues long: Dihydroxy-acid dehydratase (616 aa).

Asp-81 is a binding site for Mg(2+). Cys-122 provides a ligand contact to [2Fe-2S] cluster. Mg(2+)-binding residues include Asp-123 and Lys-124. Residue Lys-124 is modified to N6-carboxylysine. Position 195 (Cys-195) interacts with [2Fe-2S] cluster. Residue Glu-491 coordinates Mg(2+). Ser-517 (proton acceptor) is an active-site residue.

This sequence belongs to the IlvD/Edd family. As to quaternary structure, homodimer. The cofactor is [2Fe-2S] cluster. Mg(2+) serves as cofactor.

The catalysed reaction is (2R)-2,3-dihydroxy-3-methylbutanoate = 3-methyl-2-oxobutanoate + H2O. It carries out the reaction (2R,3R)-2,3-dihydroxy-3-methylpentanoate = (S)-3-methyl-2-oxopentanoate + H2O. The protein operates within amino-acid biosynthesis; L-isoleucine biosynthesis; L-isoleucine from 2-oxobutanoate: step 3/4. Its pathway is amino-acid biosynthesis; L-valine biosynthesis; L-valine from pyruvate: step 3/4. Functions in the biosynthesis of branched-chain amino acids. Catalyzes the dehydration of (2R,3R)-2,3-dihydroxy-3-methylpentanoate (2,3-dihydroxy-3-methylvalerate) into 2-oxo-3-methylpentanoate (2-oxo-3-methylvalerate) and of (2R)-2,3-dihydroxy-3-methylbutanoate (2,3-dihydroxyisovalerate) into 2-oxo-3-methylbutanoate (2-oxoisovalerate), the penultimate precursor to L-isoleucine and L-valine, respectively. This Methylobacillus flagellatus (strain ATCC 51484 / DSM 6875 / VKM B-1610 / KT) protein is Dihydroxy-acid dehydratase.